Reading from the N-terminus, the 339-residue chain is Transcription factor IIIA (339 aa).

9 C2H2-type zinc fingers span residues 12 to 36, 42 to 66, 72 to 97, 104 to 128, 134 to 158, 161 to 187, 190 to 212, 219 to 244, and 250 to 274; these read FICS…LCKH, FPCT…VLSH, CKCE…KRAH, YVCY…QYIH, FKCS…EKTH, YPCR…AELH, VTCS…KKIH, YRCP…LTFH, and FVCE…FNTH. Positions 271 to 339 are disordered; that stretch reads FNTHDPEKKK…LPVLENLTLK (69 aa). Basic residues predominate over residues 299 to 309; sequence KPKKSKKKKKP. Polar residues predominate over residues 311–323; sequence QTPAMESQEQQPD.

It localises to the nucleus. In terms of biological role, involved in ribosomal large subunit biogenesis. Interacts with the internal control region (ICR) of approximately 50 bases within the 5S RNA genes, is required for correct transcription of these genes by RNA polymerase III. Also binds the transcribed 5S RNA's. This chain is Transcription factor IIIA (gtf3a), found in Anaxyrus americanus (American toad).